Here is a 976-residue protein sequence, read N- to C-terminus: MKLKSVFRSVLKYRKTNLSLLLLITYSIITLLYIFDHERYKLNLPKEDEHPEFNDLLETAWGDLQIITASFHPYTSKENDKVHDYLLKRVLEITGNSSFASVSDDKESERSILFQQQDPFNESSRFSRVTYFESSNILVKLEGKNPEEEGLLLSAHFDSVPTGYGATDDGMGVVSLLANLKYHIKHRPNRTLIFNFNNNEEFGLLGASTYFNHSWSNLTKYVINLEGTGAGGKAVLFRTSDTSTAKIYQQSVKENPFGNSIYQQGFYSRYVRSETDYKIYEENGMRGWDVAFYKPRNLYHTIKDSIQYTSKASLWHMLHTSLQLSAYVASNSLDTADQMPACYFDFIGLKFFVISAKTLFYWNCIFLLVSPVVAIGLYLISRDRMTWKSHSWLSWTRFPLSLAAGIIVQKLFSNDIIRSNPLTFSRNYFWPISAFFTQVIFTSYVLINCSNFFFPCADMKSLSIIELFIILWTILLFTSKLLYSSDYRYTGLYPLSIFFLLSTIAAILRLLALALGMRTRKRLGRECRDHHSNYSSHSQIDMERDGQENLEQPQDQFTSSQDDQASIQDDNVSTTSAGPSHNVDEDHGMDSSSQQHDERVPLLKGSNSMEEGLSTRENSLKLEYTDYAWIIQFLLIVPIPSFILFNSVDVIMDALNHTVQEGSKATFDVLRFGMVGSILMALPILPFFYKVNYITISLTALLFLISASKTLLVHPFTNSNPLKVRFSQNIDLSQGNAASVHVLGREGNFLKPMLQDLPSIKYSSTHINCTSVTNGMELCMYDGMQPNLLSTNGNTNISSMAKVHVLHNNRNSTERSPYEPIVAELLLDVKENRACTLTFESRHQAKSPVREITVYQKKNSAPQKTNITKTIKSASGINELQLHKLDFDQETYHIGVQWFPKLLTDGNLEDDKLGTKDELSVSISCYWGEYDSESVVNGTAVRKIPAFDELINYAPLSFSFTNEQKGLVIVKDAIIL.

The Cytoplasmic segment spans residues 1 to 15 (MKLKSVFRSVLKYRK). Residues 16-36 (TNLSLLLLITYSIITLLYIFD) traverse the membrane as a helical segment. The Vacuolar portion of the chain corresponds to 37 to 359 (HERYKLNLPK…KFFVISAKTL (323 aa)). Asparagine 96 and asparagine 121 each carry an N-linked (GlcNAc...) asparagine glycan. Residues histidine 156 and aspartate 168 each contribute to the Zn(2+) site. Asparagine 189 carries an N-linked (GlcNAc...) asparagine glycan. Glutamate 200 (proton acceptor) is an active-site residue. Position 201 (glutamate 201) interacts with Zn(2+). Asparagine 212 and asparagine 217 each carry an N-linked (GlcNAc...) asparagine glycan. Zn(2+) contacts are provided by glutamate 226 and histidine 300. A helical membrane pass occupies residues 360 to 380 (FYWNCIFLLVSPVVAIGLYLI). The Cytoplasmic segment spans residues 381–392 (SRDRMTWKSHSW). The chain crosses the membrane as a helical span at residues 393–412 (LSWTRFPLSLAAGIIVQKLF). Over 413–428 (SNDIIRSNPLTFSRNY) the chain is Vacuolar. The chain crosses the membrane as a helical span at residues 429 to 449 (FWPISAFFTQVIFTSYVLINC). Residues 450–461 (SNFFFPCADMKS) lie on the Cytoplasmic side of the membrane. Residues 462–482 (LSIIELFIILWTILLFTSKLL) form a helical membrane-spanning segment. Over 483–496 (YSSDYRYTGLYPLS) the chain is Vacuolar. The chain crosses the membrane as a helical span at residues 497–517 (IFFLLSTIAAILRLLALALGM). Over 518 to 627 (RTRKRLGREC…NSLKLEYTDY (110 aa)) the chain is Cytoplasmic. The tract at residues 528–610 (RDHHSNYSSH…PLLKGSNSME (83 aa)) is disordered. The segment covering 549 to 558 (NLEQPQDQFT) has biased composition (polar residues). A compositionally biased stretch (low complexity) spans 559–570 (SSQDDQASIQDD). The span at 582-601 (NVDEDHGMDSSSQQHDERVP) shows a compositional bias: basic and acidic residues. A helical membrane pass occupies residues 628–648 (AWIIQFLLIVPIPSFILFNSV). The Vacuolar portion of the chain corresponds to 649-668 (DVIMDALNHTVQEGSKATFD). Residue asparagine 656 is glycosylated (N-linked (GlcNAc...) asparagine). The helical transmembrane segment at 669 to 689 (VLRFGMVGSILMALPILPFFY) threads the bilayer. Residues 690-692 (KVN) lie on the Cytoplasmic side of the membrane. Residues 693–713 (YITISLTALLFLISASKTLLV) traverse the membrane as a helical segment. Residues 714 to 976 (HPFTNSNPLK…LVIVKDAIIL (263 aa)) lie on the Vacuolar side of the membrane. Residues asparagine 768, asparagine 796, asparagine 811, asparagine 866, and asparagine 937 are each glycosylated (N-linked (GlcNAc...) asparagine).

It belongs to the peptidase M28 family. Zn(2+) serves as cofactor.

Its subcellular location is the vacuole membrane. Its function is as follows. May be involved in vacuolar sorting and osmoregulation. The polypeptide is Vacuolar membrane protease (Saccharomyces cerevisiae (strain RM11-1a) (Baker's yeast)).